Consider the following 89-residue polypeptide: uncharacterized protein (89 aa).

Residue Met1 is a topological domain, cytoplasmic. A helical transmembrane segment spans residues 2 to 22; that stretch reads LFEIIYIVSSLFYIVSIIYTL. At 23–89 the chain is on the extracellular side; that stretch reads MRIKHINTVA…ELKKSKLCEG (67 aa).

Its subcellular location is the host membrane. This is an uncharacterized protein from Sulfolobus islandicus filamentous virus (isolate Iceland/Hveragerdi) (SIFV).